The primary structure comprises 86 residues: MRPEYAVLFLALIALTYARSNEDVREEIKNEIEKDILEDLVEDEGELDDKAIDVNDAKPFRIRFRRIRWRKLVPYIPVALKLAGKK.

An N-terminal signal peptide occupies residues Met1–Ala18. A propeptide spanning residues Arg19 to Ala57 is cleaved from the precursor. Ala83 is modified (alanine amide).

The protein belongs to the arminin family. In terms of tissue distribution, expressed in entodermal epithelium along the body column.

It is found in the secreted. It localises to the target cell membrane. Functionally, antimicrobial peptide with a broad-spectrum antimicrobial activity. Keeps its antibacterial activity under a wide range of salt concentrations that mimic physiological conditions of human blood, which is surprising, since Hydra is an obligate freshwater animal with nearly no salt tolerance. Does not affect red blood cells. The chain is Arminin 7246 from Hydra viridissima (Green hydra).